Reading from the N-terminus, the 291-residue chain is Phosphatidylglycerol--prolipoprotein diacylglyceryl transferase (291 aa).

7 consecutive transmembrane segments (helical) span residues 21–41 (IALH…MWLA), 60–80 (LLYA…VLFY), 96–116 (WDGG…MWWF), 124–144 (FLQV…MGRI), 198–218 (SQLY…NLYI), 225–245 (GSVS…VEFF), and 258–278 (ISMG…MMIW). Residue Arg143 coordinates a 1,2-diacyl-sn-glycero-3-phospho-(1'-sn-glycerol).

The protein belongs to the Lgt family.

Its subcellular location is the cell inner membrane. The enzyme catalyses L-cysteinyl-[prolipoprotein] + a 1,2-diacyl-sn-glycero-3-phospho-(1'-sn-glycerol) = an S-1,2-diacyl-sn-glyceryl-L-cysteinyl-[prolipoprotein] + sn-glycerol 1-phosphate + H(+). It functions in the pathway protein modification; lipoprotein biosynthesis (diacylglyceryl transfer). Its function is as follows. Catalyzes the transfer of the diacylglyceryl group from phosphatidylglycerol to the sulfhydryl group of the N-terminal cysteine of a prolipoprotein, the first step in the formation of mature lipoproteins. The chain is Phosphatidylglycerol--prolipoprotein diacylglyceryl transferase from Photorhabdus laumondii subsp. laumondii (strain DSM 15139 / CIP 105565 / TT01) (Photorhabdus luminescens subsp. laumondii).